Reading from the N-terminus, the 98-residue chain is Small ribosomal subunit protein bS20 (98 aa).

A disordered region spans residues 76 to 98; it reads HPNNGARKKSRLASKLKPIEQTA.

It belongs to the bacterial ribosomal protein bS20 family.

Functionally, binds directly to 16S ribosomal RNA. This Trichormus variabilis (strain ATCC 29413 / PCC 7937) (Anabaena variabilis) protein is Small ribosomal subunit protein bS20.